The following is a 130-amino-acid chain: uncharacterized protein (130 aa).

Residues 76 to 102 (RKCKNGPSPNKRGSASGCSRRGGGRGS) are disordered.

This is an uncharacterized protein from Saccharomyces cerevisiae (strain ATCC 204508 / S288c) (Baker's yeast).